A 209-amino-acid chain; its full sequence is Uracil phosphoribosyltransferase (209 aa).

5-phospho-alpha-D-ribose 1-diphosphate contacts are provided by residues Arg79, Arg104, and Asp131–Ser139. Residues Ile194 and Gly199 to Ala201 each bind uracil. Residue Asp200 participates in 5-phospho-alpha-D-ribose 1-diphosphate binding.

It belongs to the UPRTase family. Mg(2+) is required as a cofactor.

It carries out the reaction UMP + diphosphate = 5-phospho-alpha-D-ribose 1-diphosphate + uracil. It functions in the pathway pyrimidine metabolism; UMP biosynthesis via salvage pathway; UMP from uracil: step 1/1. With respect to regulation, allosterically activated by GTP. Functionally, catalyzes the conversion of uracil and 5-phospho-alpha-D-ribose 1-diphosphate (PRPP) to UMP and diphosphate. The protein is Uracil phosphoribosyltransferase of Ligilactobacillus salivarius (strain UCC118) (Lactobacillus salivarius).